A 257-amino-acid polypeptide reads, in one-letter code: Imidazole glycerol phosphate synthase subunit HisF (257 aa).

Catalysis depends on residues aspartate 12 and aspartate 131.

Belongs to the HisA/HisF family. In terms of assembly, heterodimer of HisH and HisF.

The protein localises to the cytoplasm. It catalyses the reaction 5-[(5-phospho-1-deoxy-D-ribulos-1-ylimino)methylamino]-1-(5-phospho-beta-D-ribosyl)imidazole-4-carboxamide + L-glutamine = D-erythro-1-(imidazol-4-yl)glycerol 3-phosphate + 5-amino-1-(5-phospho-beta-D-ribosyl)imidazole-4-carboxamide + L-glutamate + H(+). Its pathway is amino-acid biosynthesis; L-histidine biosynthesis; L-histidine from 5-phospho-alpha-D-ribose 1-diphosphate: step 5/9. Functionally, IGPS catalyzes the conversion of PRFAR and glutamine to IGP, AICAR and glutamate. The HisF subunit catalyzes the cyclization activity that produces IGP and AICAR from PRFAR using the ammonia provided by the HisH subunit. The chain is Imidazole glycerol phosphate synthase subunit HisF from Burkholderia lata (strain ATCC 17760 / DSM 23089 / LMG 22485 / NCIMB 9086 / R18194 / 383).